We begin with the raw amino-acid sequence, 336 residues long: 3-isopropylmalate dehydrogenase (336 aa).

Residues R87, R97, R121, and D211 each coordinate substrate. Residues D211, D235, and D239 each contribute to the Mg(2+) site. Residue 271-283 coordinates NAD(+); it reads GSAPDIAGQGIAD.

This sequence belongs to the isocitrate and isopropylmalate dehydrogenases family. LeuB type 2 subfamily. As to quaternary structure, homodimer. Requires Mg(2+) as cofactor. The cofactor is Mn(2+).

Its subcellular location is the cytoplasm. The catalysed reaction is (2R,3S)-3-isopropylmalate + NAD(+) = 4-methyl-2-oxopentanoate + CO2 + NADH. It functions in the pathway amino-acid biosynthesis; L-leucine biosynthesis; L-leucine from 3-methyl-2-oxobutanoate: step 3/4. Functionally, catalyzes the oxidation of 3-carboxy-2-hydroxy-4-methylpentanoate (3-isopropylmalate) to 3-carboxy-4-methyl-2-oxopentanoate. The product decarboxylates to 4-methyl-2 oxopentanoate. This Mycobacterium leprae (strain Br4923) protein is 3-isopropylmalate dehydrogenase.